We begin with the raw amino-acid sequence, 190 residues long: Large ribosomal subunit protein uL5 (190 aa).

Belongs to the universal ribosomal protein uL5 family. In terms of assembly, part of the 50S ribosomal subunit; part of the 5S rRNA/L5/L18/L25 subcomplex. Contacts the 5S rRNA and the P site tRNA. Forms a bridge to the 30S subunit in the 70S ribosome.

Its function is as follows. This is one of the proteins that bind and probably mediate the attachment of the 5S RNA into the large ribosomal subunit, where it forms part of the central protuberance. In the 70S ribosome it contacts protein S13 of the 30S subunit (bridge B1b), connecting the 2 subunits; this bridge is implicated in subunit movement. Contacts the P site tRNA; the 5S rRNA and some of its associated proteins might help stabilize positioning of ribosome-bound tRNAs. The chain is Large ribosomal subunit protein uL5 from Bifidobacterium longum (strain DJO10A).